Consider the following 396-residue polypeptide: Interleukin-3 receptor subunit alpha (396 aa).

Residues 1–16 (MAANLWLILGLLASHS) form the signal peptide. The Extracellular segment spans residues 17-331 (SDLAAVREAP…VCPPEVMPVK (315 aa)). Cystine bridges form between cysteine 62/cysteine 79, cysteine 87/cysteine 223, cysteine 125/cysteine 134, cysteine 165/cysteine 187, and cysteine 245/cysteine 323. Residue asparagine 91 is glycosylated (N-linked (GlcNAc...) asparagine). N-linked (GlcNAc...) asparagine glycans are attached at residues asparagine 213, asparagine 246, asparagine 272, and asparagine 283. The short motif at 312–316 (LSSWS) is the WSXWS motif element. The helical transmembrane segment at 332-355 (TALVTSVATVLGAGLVAAGLLLWW) threads the bilayer. Topologically, residues 356–396 (RKSLLYRLCPPIPRLRLPLAGEMVVWEPALEDCEVTPVTDA) are cytoplasmic. A Glycyl lysine isopeptide (Lys-Gly) (interchain with G-Cter in ubiquitin) cross-link involves residue lysine 357. A Box 1 motif motif is present at residues 363–371 (LCPPIPRLR).

Belongs to the type I cytokine receptor family. Type 5 subfamily. As to quaternary structure, interacts with IL3. Heterodimer of an alpha and a beta subunit. The beta subunit is common to the IL3, IL5 and GM-CSF receptors. Ubiquitinated at Lys-357 by RNFT2 in response to IL3. Ubiquitination leads ligand-induced degradation by the proteasome. Ubiquitinated by RNF128 via 'Lys-27'-linked polyubiquitination, facilitating its degradation through the lysosomal pathway.

The protein localises to the cell membrane. Its subcellular location is the endomembrane system. Functionally, cell surface receptor for IL3 expressed on hematopoietic progenitor cells, monocytes and B-lymphocytes that controls the production and differentiation of hematopoietic progenitor cells into lineage-restricted cells. Ligand stimulation rapidly induces hetrodimerization with IL3RB, phosphorylation and enzyme activity of effector proteins such as JAK2 and PI3K that play a role in signaling cell proliferation and differentiation. Activation of JAK2 leads to STAT5-mediated transcriptional program. The chain is Interleukin-3 receptor subunit alpha (Il3ra) from Mus musculus (Mouse).